The primary structure comprises 1037 residues: uncharacterized protein (1037 aa).

This is an uncharacterized protein from Saccharomyces cerevisiae (strain ATCC 204508 / S288c) (Baker's yeast).